The chain runs to 319 residues: Thioredoxin reductase (319 aa).

FAD is bound at residue 36–43 (TGTNKGGQ). Cys136 and Cys139 are joined by a disulfide. Residue 288 to 297 (DVIDHVYRQA) coordinates FAD.

This sequence belongs to the class-II pyridine nucleotide-disulfide oxidoreductase family. In terms of assembly, homodimer. FAD serves as cofactor.

The protein resides in the cytoplasm. The enzyme catalyses [thioredoxin]-dithiol + NADP(+) = [thioredoxin]-disulfide + NADPH + H(+). This Buchnera aphidicola subsp. Acyrthosiphon pisum (strain APS) (Acyrthosiphon pisum symbiotic bacterium) protein is Thioredoxin reductase (trxB).